The chain runs to 970 residues: Polycystin-2 (970 aa).

The span at 1–11 (MVNSSRVQPQQ) shows a compositional bias: polar residues. A disordered region spans residues 1–182 (MVNSSRVQPQ…GDPLHRHLPL (182 aa)). Residues 1-221 (MVNSSRVQPQ…STDREKYLKS (221 aa)) are Cytoplasmic-facing. The segment covering 25-45 (GPGRLMAGGAIAGAGLAAPGG) has biased composition (low complexity). The segment covering 47–60 (REQRGLEIEMERIR) has biased composition (basic and acidic residues). Low complexity predominate over residues 62–83 (AAARDPPAGASASPSPPLSSCS). A phosphoserine mark is found at serine 76 and serine 80. Acidic residues predominate over residues 95-109 (EAEEEEEEEEVEGEE). Residues 125–138 (RRSASSSAVSSAGA) show a composition bias toward low complexity. Arginine 139 is modified (omega-N-methylarginine). Positions 139–148 (RGRGLGGYHG) are enriched in gly residues. A helical transmembrane segment spans residues 222–243 (VLRELATYLLFLIVLCILTYGM). Residues 244-470 (MSSSVYYYTR…PVKLIRYVTT (227 aa)) lie on the Extracellular side of the membrane. N-linked (GlcNAc...) asparagine glycosylation is found at asparagine 301, asparagine 307, and asparagine 330. A disulfide bridge links cysteine 333 with cysteine 346. Residues asparagine 364 and asparagine 377 are each glycosylated (N-linked (GlcNAc...) asparagine). The chain crosses the membrane as a helical span at residues 471 to 491 (FDFFLAACEIIFCLFILYYVV). Topologically, residues 492–507 (EEILEIRIHKLHYFRS) are cytoplasmic. The chain crosses the membrane as a helical span at residues 508 to 528 (FWNCLDVVIIVLSVVAIGINI). The Extracellular segment spans residues 529–554 (YRTSNVEALLQFLEDQNTFPNFENLA). Residues 555–575 (YWQTQFNNIAAVIVFFVWIKL) traverse the membrane as a helical segment. Glutamine 559 lines the cholesterol pocket. Residues 576-599 (FKFINFNRTMSQLSTTMSRCAKDL) lie on the Cytoplasmic side of the membrane. The helical transmembrane segment at 600-621 (FGFAIMFFIIFLAYAQLAYLVF) threads the bilayer. The Extracellular segment spans residues 622 to 633 (GTQVDDFSTFQE). An intramembrane region (pore-forming) is located at residues 634 to 648 (CIFTQFRIILGDINF). Position 643 (leucine 643) interacts with Ca(2+). Positions 643-645 (LGD) match the Selectivity filter motif. The Extracellular portion of the chain corresponds to 649–656 (AEIEEANR). A helical membrane pass occupies residues 657-677 (VLGPIYFTTFVFFMFFILLNM). The Cytoplasmic portion of the chain corresponds to 678 to 970 (FLAIINDTYS…GGNGSANIHV (293 aa)). In terms of domain architecture, EF-hand spans 750–785 (KGHTDAEIEAIFTKYDQDGDQELTEHEHQQMRDDLE). Residues aspartate 765, aspartate 767, aspartate 769, glutamate 771, and glutamate 776 each coordinate Ca(2+). A disordered region spans residues 766 to 833 (QDGDQELTEH…HSSRRRGSIS (68 aa)). A compositionally biased stretch (basic and acidic residues) spans 772 to 797 (LTEHEHQQMRDDLEKEREDLDLDHSS). A compositionally biased stretch (low complexity) spans 798 to 809 (LPRPMSSRSFPR). Phosphoserine is present on residues serine 803, serine 810, serine 814, and serine 831. Residues 805–824 (RSFPRSLDDSEEEDDDDSGH) form a linker region. Positions 812-823 (DDSEEEDDDDSG) are important for interaction with PACS1 and PACS2. A coiled-coil region spans residues 835 to 874 (GVSYEEFQVLVRRVDRMEHSIGSIVSKIDAVIVKLEIMER). The interval 921-970 (DDAASQISHGLGTPLGLNGQPRPRSSRPSSSQSTEGMEGGGGNGSANIHV) is disordered. Low complexity predominate over residues 940–956 (QPRPRSSRPSSSQSTEG).

This sequence belongs to the polycystin family. As to quaternary structure, homotetramer. Component of the heterotetrameric polycystin channel complex with PKD1; the tetramer contains one PKD1 chain and three PKD2 chains. Isoform 1 interacts with PKD1 while isoform 3 does not. Interacts with PKD1L1; probably forms a Ca(2+) channel. Interacts with CD2AP. Interacts with HAX1. Interacts with NEK8. Part of a complex containing AKAP5, ADCY5, ADCY6 and PDE4C. Interacts (via C-terminus) with TRPV4 (via C-terminus). Interacts (via C-terminal acidic region) with PACS1 and PACS2; these interactions retain the protein in the endoplasmic reticulum and prevent trafficking to the cell membrane. Interacts with TMEM33. Form a heterotetramer with TRPC1 with a 2:2 stoichiometry; has distinct channel properties separate from PKD2 or TRPC1 homomers alone. Interacts with TMEM120A; TMEM120A inhibits PKD2 channel activity through the physical association of PKD2 with TMEM120A. Interacts (via N-terminus) with RYR2; regulates RYR2 channel activity. N-glycosylated. The four subunits in a tetramer probably differ in the extent of glycosylation; simultaneous glycosylation of all experimentally validated sites would probably create steric hindrance. In terms of processing, phosphorylated. Phosphorylation is important for protein function; a mutant that lacks the N-terminal phosphorylation sites cannot complement a zebrafish pkd2-deficient mutant. PKD-mediated phosphorylation at the C-terminus regulates its function in the release of Ca(2+) stores from the endoplasmic reticulum. Phosphorylation at Ser-814 regulates PKD2 trafficking. Phosphorylation at Ser-76 is required for PKD2 trafficking to or retention at the lateral plasma membrane. Phosphorylation at Ser-803, Ser-814 and Ser-831 regulates PKD2 channel activity. Post-translationally, sumoylated by SUMO1; sumoylation regulates PKD2 membrane recycling and is necessary for intravascular pressure-induced arterial contractility. As to expression, expressed in mesenchymally derived structures in the developing embryo at day 12.5. In adult, mostly expressed in kidney.

The protein resides in the cell projection. It is found in the cilium membrane. It localises to the endoplasmic reticulum membrane. Its subcellular location is the cell membrane. The protein localises to the basolateral cell membrane. The protein resides in the cytoplasmic vesicle membrane. It is found in the golgi apparatus. It localises to the vesicle. Its subcellular location is the secreted. The protein localises to the extracellular exosome. The enzyme catalyses K(+)(in) = K(+)(out). It carries out the reaction Na(+)(in) = Na(+)(out). It catalyses the reaction Ca(2+)(in) = Ca(2+)(out). Channel activity is regulated by phosphorylation. Channel activity is regulated by intracellular Ca(2+). At the endoplasmic reticulum membrane (ER), TMEM33 enhances its channel activity. TMEM120A inhibits the channel activity of PKD2, and mediates mechanosensitivity of the PKD2-TMEM120A channel complex. PKD1/PKD2 complex on the plasma membrane is activated by PKD1 N-terminus. In terms of biological role, forms a nonselective cation channel. Can function as a homotetrameric ion channel or can form heteromer with PKD1. Displays distinct function depending on its subcellular localization and regulation by its binding partners. Functions as a cation channel, with a preference for monovalent cations over divalent cations that allows K(+), Na(+) and Ca(2+) influx, with low selectivity for Ca(2+). Involved in fluid-flow mechanosensation in the primary cilium in renal epithelium. In the endoplasmic reticulum, likely functions as a K(+) channel to facilitate Ca(2+) release. The heterotetrameric PKD1/PKD2 channel has higher Ca(2+) permeability than homomeric PKD2 channel and acts as a primarily Ca(2+)-permeable channel. Interacts with and acts as a regulator of a number of other channels, such as TRPV4, TRPC1, IP3R, RYR2, ultimately further affecting intracellular signaling, to modulate intracellular Ca(2+) signaling. Together with TRPV4, forms mechano- and thermosensitive channels in cilium. In cardiomyocytes, PKD2 modulates Ca(2+) release from stimulated RYR2 receptors through direct association. Also involved in left-right axis specification via its role in sensing nodal flow; forms a complex with PKD1L1 in cilia to facilitate flow detection in left-right patterning. Acts as a regulator of cilium length together with PKD1. Mediates systemic blood pressure and contributes to the myogenic response in cerebral arteries though vasoconstriction. The chain is Polycystin-2 from Bos taurus (Bovine).